The primary structure comprises 618 residues: Delta-like protein 3 (618 aa).

The signal sequence occupies residues 1 to 26; that stretch reads MVSPRMSGLLSQTVILALIFLPQTRP. Residues 27-492 lie on the Extracellular side of the membrane; that stretch reads AGVFELQIHS…LRPGDPQRYL (466 aa). The DSL domain occupies 176–215; that stretch reads ARCEPPAVGTACTRLCRPRSAPSRCGPGLRPCAPLEDECE. EGF-like domains follow at residues 216 to 249, 274 to 310, 312 to 351, 353 to 389, 391 to 427, and 429 to 465; these read APLVCRAGCSPEHGFCEQPGECRCLEGWTGPLCT, GPGPCDGNPCANGGSCSETPRSFECTCPRGFYGLRCE, SGVTCADGPCFNGGLCVGGADPDSAYICHCPPGFQGSNCE, RVDRCSLQPCRNGGLCLDLGHALRCRCRAGFAGPRCE, DLDDCAGRACANGGTCVEGGGAHRCSCALGFGGRDCR, and RADPCAARPCAHGGRCYAHFSGLVCACAPGYMGARCE. Cystine bridges form between C220–C231, C224–C237, C239–C248, C278–C289, C283–C298, C300–C309, C316–C327, C321–C339, C341–C350, C357–C368, C362–C377, C379–C388, C395–C406, C400–C415, C417–C426, C433–C444, C438–C453, and C455–C464. A helical transmembrane segment spans residues 493-513; the sequence is LPPALGLLVAAGVAGAALLLV. The Cytoplasmic segment spans residues 514–618; sequence HVRRRGHSQD…PYPSSILSVK (105 aa). Over residues 546-562 the composition is skewed to polar residues; sequence NLRTQEGSGDGPSSSVD. The segment at 546 to 566 is disordered; sequence NLRTQEGSGDGPSSSVDWNRP.

In terms of assembly, can bind and activate Notch-1 or another Notch receptor. In terms of processing, ubiquitinated by MIB (MIB1 or MIB2), leading to its endocytosis and subsequent degradation.

The protein resides in the membrane. Functionally, inhibits primary neurogenesis. May be required to divert neurons along a specific differentiation pathway. Plays a role in the formation of somite boundaries during segmentation of the paraxial mesoderm. This Homo sapiens (Human) protein is Delta-like protein 3 (DLL3).